We begin with the raw amino-acid sequence, 353 residues long: Histidinol-phosphate aminotransferase (353 aa).

K209 carries the N6-(pyridoxal phosphate)lysine modification.

It belongs to the class-II pyridoxal-phosphate-dependent aminotransferase family. Histidinol-phosphate aminotransferase subfamily. Homodimer. The cofactor is pyridoxal 5'-phosphate.

It catalyses the reaction L-histidinol phosphate + 2-oxoglutarate = 3-(imidazol-4-yl)-2-oxopropyl phosphate + L-glutamate. Its pathway is amino-acid biosynthesis; L-histidine biosynthesis; L-histidine from 5-phospho-alpha-D-ribose 1-diphosphate: step 7/9. This Buchnera aphidicola subsp. Cinara cedri (strain Cc) protein is Histidinol-phosphate aminotransferase.